The following is a 129-amino-acid chain: Follitropin subunit beta (129 aa).

The signal sequence occupies residues 1-20 (MKTAQFYIFFFCWKAIWCNG). 6 disulfides stabilise this stretch: Cys-21–Cys-69, Cys-35–Cys-84, Cys-38–Cys-122, Cys-46–Cys-100, Cys-50–Cys-102, and Cys-105–Cys-112. Residues Asn-25 and Asn-42 are each glycosylated (N-linked (GlcNAc...) asparagine).

The protein belongs to the glycoprotein hormones subunit beta family. Heterodimer. The active follitropin is a heterodimer composed of an alpha chain/CGA shared with other hormones and a unique beta chain/FSHB shown here.

The protein resides in the secreted. In terms of biological role, together with the alpha chain CGA constitutes follitropin, the follicle-stimulating hormone, and provides its biological specificity to the hormone heterodimer. Binds FSHR, a G protein-coupled receptor, on target cells to activate downstream signaling pathways. Follitropin is involved in follicle development and spermatogenesis in reproductive organs. This chain is Follitropin subunit beta (FSHB), found in Monodelphis domestica (Gray short-tailed opossum).